A 376-amino-acid polypeptide reads, in one-letter code: Lipoprotein p33 (376 aa).

Positions 1-30 (MKIKKIKLLKALALTGAFGIVATVPVIVSS) are cleaved as a signal peptide. Cys-31 is lipidated: N-palmitoyl cysteine. A lipid anchor (S-diacylglycerol cysteine) is attached at Cys-31. The tract at residues 33–59 (STDNNGGTGDNNTGGGGSGTDQQQGTT) is disordered. The span at 38–51 (GGTGDNNTGGGGSG) shows a compositional bias: gly residues.

This sequence belongs to the p35 lipoprotein family.

Its subcellular location is the cell membrane. This Malacoplasma penetrans (strain HF-2) (Mycoplasma penetrans) protein is Lipoprotein p33.